We begin with the raw amino-acid sequence, 452 residues long: UPF0210 protein Ccel_1722 (452 aa).

Belongs to the UPF0210 family. Homodimer.

In Ruminiclostridium cellulolyticum (strain ATCC 35319 / DSM 5812 / JCM 6584 / H10) (Clostridium cellulolyticum), this protein is UPF0210 protein Ccel_1722.